A 344-amino-acid polypeptide reads, in one-letter code: UDP-3-O-acylglucosamine N-acyltransferase (344 aa).

The active-site Proton acceptor is the His-248.

The protein belongs to the transferase hexapeptide repeat family. LpxD subfamily. As to quaternary structure, homotrimer.

It carries out the reaction a UDP-3-O-[(3R)-3-hydroxyacyl]-alpha-D-glucosamine + a (3R)-hydroxyacyl-[ACP] = a UDP-2-N,3-O-bis[(3R)-3-hydroxyacyl]-alpha-D-glucosamine + holo-[ACP] + H(+). Its pathway is bacterial outer membrane biogenesis; LPS lipid A biosynthesis. In terms of biological role, catalyzes the N-acylation of UDP-3-O-acylglucosamine using 3-hydroxyacyl-ACP as the acyl donor. Is involved in the biosynthesis of lipid A, a phosphorylated glycolipid that anchors the lipopolysaccharide to the outer membrane of the cell. This is UDP-3-O-acylglucosamine N-acyltransferase from Prochlorococcus marinus (strain MIT 9312).